The primary structure comprises 375 residues: Tryptophan dimethylallyltransferase (375 aa).

L-tryptophan-binding positions include 83–84 (IL) and Glu92. The substrate site is built by Arg103, Lys189, and Tyr191. Residues Tyr193 and Arg246 each coordinate L-tryptophan. Arg259, Lys261, Tyr263, Gln345, and Tyr347 together coordinate substrate.

The protein belongs to the tryptophan dimethylallyltransferase family. As to quaternary structure, homodimer.

It catalyses the reaction L-tryptophan + dimethylallyl diphosphate = 4-(3-methylbut-2-enyl)-L-tryptophan + diphosphate. It participates in alkaloid biosynthesis; ergot alkaloid biosynthesis. In terms of biological role, tryptophan dimethylallyltransferase; part of the gene cluster that mediates the biosynthesis of fungal ergot alkaloid. DmaW catalyzes the first step of ergot alkaloid biosynthesis by condensing dimethylallyl diphosphate (DMAP) and tryptophan to form 4-dimethylallyl-L-tryptophan. The second step is catalyzed by the methyltransferase easF that methylates 4-dimethylallyl-L-tryptophan in the presence of S-adenosyl-L-methionine, resulting in the formation of 4-dimethylallyl-L-abrine. The catalase easC and the FAD-dependent oxidoreductase easE then transform 4-dimethylallyl-L-abrine to chanoclavine-I which is further oxidized by easD in the presence of NAD(+), resulting in the formation of chanoclavine-I aldehyde. Chanoclavine-I aldehyde is the precursor of ergoamides and ergopeptines in Clavicipitaceae, and clavine-type alcaloids such as fumiclavine in Trichocomaceae. However, the metabolites downstream of chanoclavine-I aldehyde in Arthrodermataceae have not been identified yet. The polypeptide is Tryptophan dimethylallyltransferase (Trichophyton verrucosum (strain HKI 0517)).